Here is a 419-residue protein sequence, read N- to C-terminus: Effector protein BipC (419 aa).

2 disordered regions span residues 62-91 (VAGS…TVSG) and 338-402 (LQSG…AKSQ). 2 stretches are compositionally biased toward basic and acidic residues: residues 71–91 (ELAR…TVSG) and 380–392 (TRDE…REAA).

This sequence belongs to the SctB/SipC family.

Its subcellular location is the secreted. The protein is Effector protein BipC (bipC) of Burkholderia pseudomallei (strain 1106a).